A 326-amino-acid chain; its full sequence is Fructose-1,6-bisphosphatase class 1 (326 aa).

The Mg(2+) site is built by Glu-90, Asp-111, Leu-113, and Asp-114. Substrate-binding positions include 114 to 117, Tyr-222, and Lys-253; that span reads DGSS. Residue Glu-259 participates in Mg(2+) binding.

It belongs to the FBPase class 1 family. Homotetramer. Requires Mg(2+) as cofactor.

The protein resides in the cytoplasm. The enzyme catalyses beta-D-fructose 1,6-bisphosphate + H2O = beta-D-fructose 6-phosphate + phosphate. Its pathway is carbohydrate biosynthesis; gluconeogenesis. The polypeptide is Fructose-1,6-bisphosphatase class 1 (Citrifermentans bemidjiense (strain ATCC BAA-1014 / DSM 16622 / JCM 12645 / Bem) (Geobacter bemidjiensis)).